The chain runs to 580 residues: Glyco-Gag protein (580 aa).

Residues 1–51 (MSGASSGTAIGAHLFGVSPEYRVLIGDGGAGPSKSLSEVSFSVWYRSRAAR) are Cytoplasmic-facing. A helical transmembrane segment spans residues 52-72 (LVILCLVASFLVPCLTFLIAE). Topologically, residues 73–580 (AVMGQTVTTP…ANSTLLNLED (508 aa)) are extracellular. N-linked (GlcNAc...) asparagine; by host glycosylation occurs at Asn134. 3 disordered regions span residues 171 to 282 (VRPF…NRPQ), 491 to 514 (ETPEEREERLWQRQEERDKKRHKE), and 560 to 580 (RDCPKRPRKKPANSTLLNLED). The segment covering 174–193 (FLPPPKPPTPLPQPLSPQPS) has biased composition (pro residues). Residues 194 to 203 (APLTSSLYPV) show a composition bias toward low complexity. 2 stretches are compositionally biased toward pro residues: residues 204–220 (VPKPDPPKPPVLPPDPS) and 230–245 (EPPPYPGGHGPPPSGP). Over residues 491 to 508 (ETPEEREERLWQRQEERD) the composition is skewed to basic and acidic residues. Over residues 571–580 (ANSTLLNLED) the composition is skewed to polar residues. Asn572 carries N-linked (GlcNAc...) asparagine; by host glycosylation.

Post-translationally, glycosylated by host. Cleaved by host near the middle of the molecule, releasing the c-terminal half containing capsid and nucleoprotein domains op GAG.

Its subcellular location is the host cell membrane. In terms of biological role, plays a role in viral particle release. Presumably acts by facilitating the fission of the virion bud at the cell surface. The chain is Glyco-Gag protein from Feline leukemia virus.